Consider the following 384-residue polypeptide: GTPase Obg (384 aa).

The Obg domain maps to 1-159; it reads MKFIDEAKIE…RSLQLELKVL (159 aa). The segment at 20 to 46 is disordered; it reads ATSFRREKFVPRGGPDGGDGGKGGSVW. Residues 33-43 are compositionally biased toward gly residues; that stretch reads GPDGGDGGKGG. In terms of domain architecture, OBG-type G spans 160-348; the sequence is ADVGLLGMPN…LVHQINQYLI (189 aa). GTP contacts are provided by residues 166–173, 191–195, 213–216, 284–287, and 329–331; these read GMPNAGKS, FTTLH, DIPG, NKLD, and SAL. The Mg(2+) site is built by Ser-173 and Thr-193. The disordered stretch occupies residues 364 to 384; sequence ATNVEIAEQQPKTDTGVFKPE.

It belongs to the TRAFAC class OBG-HflX-like GTPase superfamily. OBG GTPase family. As to quaternary structure, monomer. It depends on Mg(2+) as a cofactor.

Its subcellular location is the cytoplasm. An essential GTPase which binds GTP, GDP and possibly (p)ppGpp with moderate affinity, with high nucleotide exchange rates and a fairly low GTP hydrolysis rate. Plays a role in control of the cell cycle, stress response, ribosome biogenesis and in those bacteria that undergo differentiation, in morphogenesis control. This chain is GTPase Obg, found in Neisseria meningitidis serogroup A / serotype 4A (strain DSM 15465 / Z2491).